The primary structure comprises 361 residues: Mitochondrial fission regulator 2 (361 aa).

Ser137 bears the Phosphoserine mark. Disordered regions lie at residues 191–286 (FIDL…VPNM) and 298–322 (LRPV…EWDP). Residues 219 to 231 (VLPPPPPPPPPPQ) show a composition bias toward pro residues. The segment covering 232-244 (FSLQPPSSLPMQP) has biased composition (low complexity). A compositionally biased stretch (basic and acidic residues) spans 250-282 (HDIDSLATEMERQLSGVKKTDDSHHSKSQRLRD). Residues Ser304 and Ser340 each carry the phosphoserine modification.

Belongs to the MTFR1 family. Expressed predominantly in testis (at protein level). Expressed to a lower extent in spleen.

Its subcellular location is the mitochondrion. In terms of biological role, may play a role in mitochondrial aerobic respiration essentially in the testis. Can also promote mitochondrial fission. This chain is Mitochondrial fission regulator 2 (Mtfr2), found in Mus musculus (Mouse).